A 199-amino-acid polypeptide reads, in one-letter code: Protein-methionine-sulfoxide reductase heme-binding subunit MsrQ (199 aa).

Helical transmembrane passes span 8-28 (IIWLKVCLHLVGFLPLLWLFW), 82-102 (LWCFVWATLHLTSYALLELGI), 116-136 (PYLTLGIISWLALLALTLTST), and 153-173 (VVYLVAILAPVHYLWSVKVLS).

This sequence belongs to the MsrQ family. In terms of assembly, heterodimer of a catalytic subunit (MsrP) and a heme-binding subunit (MsrQ). It depends on FMN as a cofactor. The cofactor is heme b.

It is found in the cell inner membrane. Part of the MsrPQ system that repairs oxidized periplasmic proteins containing methionine sulfoxide residues (Met-O), using respiratory chain electrons. Thus protects these proteins from oxidative-stress damage caused by reactive species of oxygen and chlorine generated by the host defense mechanisms. MsrPQ is essential for the maintenance of envelope integrity under bleach stress, rescuing a wide series of structurally unrelated periplasmic proteins from methionine oxidation, including the primary periplasmic chaperone SurA and the lipoprotein Pal. MsrQ provides electrons for reduction to the reductase catalytic subunit MsrP, using the quinone pool of the respiratory chain. The sequence is that of Protein-methionine-sulfoxide reductase heme-binding subunit MsrQ from Salmonella arizonae (strain ATCC BAA-731 / CDC346-86 / RSK2980).